A 555-amino-acid polypeptide reads, in one-letter code: Connector enhancer of kinase suppressor of ras 3 (555 aa).

In terms of domain architecture, SAM spans 7–72 (WSPKQVVDWT…LEAVDLLCAL (66 aa)). In terms of domain architecture, CRIC spans 80–174 (NMKNLVLKLR…TTVQKDCFVA (95 aa)). A PDZ domain is found at 211-293 (EVHLPNIKPG…GVVLLLKKRP (83 aa)). Disordered stretches follow at residues 309–334 (WKPP…DTSL), 347–390 (PPPP…FLDQ), and 517–537 (IPFQ…KSSS). In terms of domain architecture, DUF1170 spans 325-546 (SPESTMDTSL…STEPSLLVSW (222 aa)). Phosphoserine is present on residues serine 381 and serine 383.

It belongs to the CNKSR family. As to quaternary structure, interacts with epithelial sodium channel ENaC. Interacts directly with SCNN1A (ENaC subunit alpha) and SCNN1B (ENaC subunit beta) C-terminal tails. Interacts with ENaC regulatory proteins NEDD4L, RAF1 and SGK1.

It is found in the cytoplasm. It localises to the apical cell membrane. In terms of biological role, involved in transepithelial sodium transport. Regulates aldosterone-induced and epithelial sodium channel (ENaC)-mediated sodium transport through regulation of ENaC cell surface expression. Acts as a scaffold protein coordinating the assembly of an ENaC-regulatory complex (ERC). The sequence is that of Connector enhancer of kinase suppressor of ras 3 (CNKSR3) from Homo sapiens (Human).